The following is a 278-amino-acid chain: Protein MGF 505-3R (278 aa).

The protein belongs to the asfivirus MGF 505 family.

Its function is as follows. Plays a role in virus cell tropism, and may be required for efficient virus replication in macrophages. This African swine fever virus (isolate Tick/Malawi/Lil 20-1/1983) (ASFV) protein is Protein MGF 505-3R.